Here is a 780-residue protein sequence, read N- to C-terminus: Cullin-5 (780 aa).

Phosphoserine is present on Ser34. Thr210 bears the Phosphothreonine mark. In terms of domain architecture, Cullin neddylation spans 713-772 (LRTRKLYIQIMKMRKKISNAQLQTELVEILKNMFLPQKKMIKEQIEWLIEHKYIRRDESD). Lys724 is covalently cross-linked (Glycyl lysine isopeptide (Lys-Gly) (interchain with G-Cter in NEDD8)).

The protein belongs to the cullin family. As to quaternary structure, component of multiple cullin-5-RING E3 ubiquitin-protein ligase complexes (ECS complexes, also named CRL5 complexes) formed of CUL5, Elongin BC (ELOB and ELOC), RNF7/RBX2 and a variable SOCS box domain-containing protein as substrate-specific recognition component. CUL5-containing ECS complexes specifically contain RNF7/RBX2, and not RBX1, as catalytic subunit. Component of the ECS(ASB2) complex with the substrate recognition component ASB2. Component of the ECS(ASB6) complex with the substrate recognition component ASB6. Component of the ECS(ASB7) complex with the substrate recognition component ASB7. Component of the ECS(ASB9) complex with the substrate recognition component ASB9. Component of the ECS(ASB11) complex with the substrate recognition component ASB11. Component of the ECS(ASB12) complex with the substrate recognition component ASB12. Component of the ECS(LRRC41) complex with the substrate recognition component LRRC41. Component of the ECS(SOCS1) complex with the substrate recognition component SOCS1. Component of the ECS(SOCS2) complex with the substrate recognition component SOCS2. Component of the ECS(WSB1) complex with the substrate recognition subunit WSB1. Component of the ECS(SOCS3) complex with the substrate recognition component SOCS3. Component of the ECS(SOCS7) complex with the substrate recognition component SOCS7. Component of the ECS(SPSB1) complex with the substrate recognition component SPSB1. Component of the ECS(SPSB3) complex with the substrate recognition component SPSB3. Component of the ECS(SPSB2) complex with the substrate recognition component SPSB2. Component of the ECS(SPSB4) complex with the substrate recognition component SPSB4. Component of the ECS(RAB40) complex with the substrate recognition subunit RAB40A, RAB40B or RAB40C. Component of the ECS(KLHDC1) complex with the substrate recognition component KLHDC1. Component of the ECS(PCMTD1) complex with the substrate recognition subunit PCMTD1. May also form complexes containing RBX1 and ELOA or VHL; additional evidence is however required to confirm this result in vivo. Interacts (when neddylated) with ARIH2; leading to activate the E3 ligase activity of ARIH2. Interacts with ERCC6; the interaction is induced by DNA damaging agents or inhibitors of RNA polymerase II elongation. Interacts with ELOA (via the BC-box). Interacts (unneddylated form) with DCUN1D1, DCUN1D2, DCUN1D3, DCUN1D4 and DCUN1D5; these interactions promote the cullin neddylation. Post-translationally, neddylated; which enhances the ubiquitination activity of ECS complexes and prevents binding of the inhibitor CAND1. Deneddylated via its interaction with the COP9 signalosome (CSN). Kidney collecting tubules.

It is found in the nucleus. It participates in protein modification; protein ubiquitination. Functionally, core component of multiple cullin-5-RING E3 ubiquitin-protein ligase complexes (ECS complexes, also named CRL5 complexes), which mediate the ubiquitination and subsequent proteasomal degradation of target proteins. Acts a scaffold protein that contributes to catalysis through positioning of the substrate and the ubiquitin-conjugating enzyme. The functional specificity of the E3 ubiquitin-protein ligase complex depends on the variable SOCS box-containing substrate recognition component. Acts as a key regulator of neuron positioning during cortex development: component of various SOCS-containing ECS complexes, such as the ECS(SOCS7) complex, that regulate reelin signaling by mediating ubiquitination and degradation of DAB1. ECS(SOCS1) seems to direct ubiquitination of JAK2. The ECS(SOCS2) complex mediates the ubiquitination and subsequent proteasomal degradation of phosphorylated EPOR and GHR. The ECS(SPSB3) complex catalyzes ubiquitination of nuclear CGAS. ECS(KLHDC1) complex is part of the DesCEND (destruction via C-end degrons) pathway and mediates ubiquitination and degradation of truncated SELENOS selenoprotein produced by failed UGA/Sec decoding, which ends with a glycine. The ECS(ASB9) complex mediates ubiquitination and degradation of CKB. As part of some ECS complex, promotes 'Lys-11'-linked ubiquitination and degradation of BTRC. As part of a multisubunit ECS complex, polyubiquitinates monoubiquitinated POLR2A. As part of the ECS(RAB40C) complex, mediates ANKRD28 ubiquitination and degradation, thereby regulating protein phosphatase 6 (PP6) complex activity and focal adhesion assembly during cell migration. As part of the ECS(RAB40A) complex, mediates RHOU 'Lys-48'-linked ubiquitination and degradation, thus inhibiting focal adhesion disassembly during cell migration. As part of the ECS(RAB40B) complex, mediates LIMA1/EPLIN and RAP2 ubiquitination, thereby regulating actin cytoskeleton dynamics and stress fiber formation during cell migration. May form a cell surface vasopressin receptor. The chain is Cullin-5 (CUL5) from Oryctolagus cuniculus (Rabbit).